The sequence spans 118 residues: Large ribosomal subunit protein uL18 (118 aa).

It belongs to the universal ribosomal protein uL18 family. In terms of assembly, part of the 50S ribosomal subunit; part of the 5S rRNA/L5/L18/L25 subcomplex. Contacts the 5S and 23S rRNAs.

In terms of biological role, this is one of the proteins that bind and probably mediate the attachment of the 5S RNA into the large ribosomal subunit, where it forms part of the central protuberance. The polypeptide is Large ribosomal subunit protein uL18 (Lactobacillus acidophilus (strain ATCC 700396 / NCK56 / N2 / NCFM)).